Reading from the N-terminus, the 629-residue chain is MAISPRSDATFSSQKSTPSESPRTKKFPLTEEEIFYMNCRAAYLTVFKSSLENIISKDQLYLALQHAGRNPSQKTINKYWTPQTAKLNFDDFCIILRKEKPTSKAELLKSFKQLDVNDDGCILHTDLYKFLTKRGEKMTREEVNAIINLADVNADGKFDYIKFCKLYMTTNEQCLKTTLEKLEVDSKLMRHQFGNHIEGSPERDPSPVPKPSPKITRKTDPETFLNKGDTRSSLLSATRKFKTSVSFTVTMGANGNRNSKLMEPNLIKDWQHMQSKGCFFLEEDGEIISHQYRMQIAQRSMVYLTIKPLNLSQVEGKPSPWLSVDTALYILKENESQANLQLVCFTELRNREVFGWTGELGPGIYWLIPSTTGCRLRKKIKPVTDEAQLVYRDETGELFLTKEFKSTLSDIFEVIDLDGNGLLSLEEYNFFELRTSGEKCDEDAWAVCRENFDTKRNELTRQGFMDLNLMEANDREGDPCDLWVTLHSMGYNKALELTEACPFVIDIYAEKCKPKIKAVHMEACSGQLEKAICKSVLSNGDAKVMDGYENIIVHTYSCDTWITSVIENKSDEKVIIHISNELSKNCINNRGLNIFAVEVGPKSTMVCQHVMPLNERQEWIYYCIYSLIS.

The interval 1 to 25 (MAISPRSDATFSSQKSTPSESPRTK) is disordered. Positions 7 to 21 (SDATFSSQKSTPSES) are enriched in polar residues. EF-hand domains lie at 102 to 137 (TSKA…RGEK) and 138 to 173 (MTRE…TNEQ). Positions 195–229 (NHIEGSPERDPSPVPKPSPKITRKTDPETFLNKGD) are disordered. A phosphoserine mark is found at S200 and S212. Positions 403 to 438 (EFKSTLSDIFEVIDLDGNGLLSLEEYNFFELRTSGE) constitute an EF-hand 3 domain. Ca(2+)-binding residues include D416, D418, N420, and E427.

In terms of assembly, component of the EvC complex composed of EFCAB7, IQCE, EVC2 and EVC; built from two subcomplexes, EVC2:EVC and EFCAB7:IQCE. Interacts (via EF-hand 1 and 2) with IQCE (via N-terminus); this interaction anchors the EVC-EVC2 complex in a signaling microdomain at the base of cilia and stimulates the Hedgehog (Hh) pathway. Interacts with EVC2 (via N-terminal end). Interacts with EVC.

The protein localises to the cell projection. The protein resides in the cilium membrane. In terms of biological role, component of the EvC complex that positively regulates ciliary Hedgehog (Hh) signaling. Required for the localization of the EVC2:EVC subcomplex at the base of primary cilia. In Homo sapiens (Human), this protein is EF-hand calcium-binding domain-containing protein 7 (EFCAB7).